Reading from the N-terminus, the 5193-residue chain is Usherin (5193 aa).

Positions M1–G34 are cleaved as a signal peptide. The Extracellular segment spans residues V35 to W5033. 7 N-linked (GlcNAc...) asparagine glycosylation sites follow: N230, N258, N274, N358, N415, N448, and N469. Residues Q268–R514 enclose the Laminin N-terminal domain. 24 disulfide bridges follow: C515/C524, C517/C533, C535/C546, C549/C569, C572/C581, C574/C602, C605/C614, C617/C635, C638/C652, C640/C659, C661/C670, C673/C688, C691/C705, C693/C712, C714/C723, C726/C741, C744/C756, C746/C763, C765/C774, C777/C789, C792/C805, C794/C812, C814/C823, and C826/C846. 10 Laminin EGF-like domains span residues C515–P571, C572–L637, C638–P690, C691–P743, C744–V791, C792–K848, N853–A896, C897–P947, C948–P998, and C999–K1049. N-linked (GlcNAc...) asparagine glycosylation is present at N647. Residues N836 and N853 are each glycosylated (N-linked (GlcNAc...) asparagine). Disulfide bonds link C867–C876, C879–C894, C897–C910, C899–C917, C919–C928, C931–C945, C948–C960, C950–C967, C969–C979, C982–C996, C999–C1011, C1001–C1018, C1020–C1029, and C1032–C1047. N885 is a glycosylation site (N-linked (GlcNAc...) asparagine). Residue N941 is glycosylated (N-linked (GlcNAc...) asparagine). A glycan (N-linked (GlcNAc...) asparagine) is linked at N1008. 5 Fibronectin type-III domains span residues P1055–E1143, G1147–Q1241, T1242–V1357, F1358–A1462, and Q1463–K1566. N1068, N1089, N1150, N1171, and N1222 each carry an N-linked (GlcNAc...) asparagine glycan. 3 N-linked (GlcNAc...) asparagine glycosylation sites follow: N1382, N1473, and N1626. Laminin G-like domains lie at T1511–C1700 and E1705–C1882. A disulfide bridge connects residues C1663 and C1700. N-linked (GlcNAc...) asparagine glycosylation occurs at N1770. Fibronectin type-III domains follow at residues E1847–Q1946, V1948–E2045, A2046–L2132, P2133–G2234, V2235–E2321, G2322–M2421, P2422–G2525, P2526–G2613, G2617–C2713, G2717–A2810, P2811–G2914, R2918–E3009, and G3013–D3103. A disulfide bond links C1853 and C1882. N1894 is a glycosylation site (N-linked (GlcNAc...) asparagine). The segment at V1931 to Q1955 is disordered. A compositionally biased stretch (polar residues) spans T1943 to Q1955. Residues N1958, N2095, N2121, N2177, N2186, N2249, N2276, N2313, N2368, and N2404 are each glycosylated (N-linked (GlcNAc...) asparagine). N-linked (GlcNAc...) asparagine glycosylation is found at N2575, N2647, N2701, N2761, and N2779. N2928, N2998, N3023, N3090, N3208, N3322, and N3411 each carry an N-linked (GlcNAc...) asparagine glycan. 17 consecutive Fibronectin type-III domains span residues C3395–D3489, V3490–R3580, S3581–A3671, A3672–D3766, P3769–A3857, A3858–A3955, P3956–S4059, G4060–D4148, T4149–D4256, G4257–V4346, P4347–E4437, N4438–S4522, A4523–L4625, P4628–A4725, P4726–A4818, P4819–E4921, and M4922–A5005. N-linked (GlcNAc...) asparagine glycosylation is found at N3589, N3645, N3686, N3712, N3723, and N3772. N-linked (GlcNAc...) asparagine glycans are attached at residues N3976, N4063, N4194, N4218, N4304, N4340, N4365, and N4410. N-linked (GlcNAc...) asparagine glycosylation is found at N4556, N4575, N4683, N4716, N4746, N4756, N4765, N4915, and N4934. Residues F5034–L5054 traverse the membrane as a helical segment. The Cytoplasmic portion of the chain corresponds to Q5055–L5193. A PDZ-binding motif is present at residues T5191–L5193.

Interacts with collagen IV and fibronectin via its laminin EGF-like domains. Interaction with collagen may be required for stable integration into the basement membrane. Interacts with NINL. Interacts with USH1C. Component of USH2 complex, composed of ADGRV1, PDZD7, USH2A and WHRN. Interacts with ADGRV1/MASS1 (via N-terminal PDZ domain). Interacts (via the cytoplasmic region) with WHRN. Interacts (via the cytoplasmic region) with PDZD7. Interacts (via the cytoplasmic region) with VEZT and MYO7A (via MyTH4-FERM domains); the interaction associates VEZT with the USH2 complex at the stereocilia base. Present in the testis, epididymis, oviduct, spleen, submaxillary gland, and small and large intestines. Not detected in the brain, skin, lung, skeletal muscle, cardiac muscle, liver or kidney. Expressed in smooth muscle of the colon and the epididymis. Also present in select vascular basement membranes. In the cochlea, it is present in virtually every basement membrane. It is particularly high in the strial capillary basement membranes (SCBMs). In the retina, it is again expressed in all of the basement membranes. It is also very prevalent in the lens capsule and the Bruch's layer between the retinal pigment epithelium and the choroid layer, which is very rich in basement membranes. In neonates in it is widely expressed in the basement membranes of the cochlea. Present in the synaptic terminals of retinal photoreceptors (at protein level).

Its subcellular location is the cell projection. The protein localises to the stereocilium membrane. It localises to the photoreceptor inner segment. It is found in the secreted. In terms of biological role, involved in hearing and vision as member of the USH2 complex. In the inner ear, required for the maintenance of hair bundle ankle formation, which connects growing stereocilia in developing cochlear hair cells. In retina photoreceptors, the USH2 complex is required for the maintenance of periciliary membrane complex that seems to play a role in regulating intracellular protein transport. In Mus musculus (Mouse), this protein is Usherin (Ush2A).